Reading from the N-terminus, the 284-residue chain is MVLDLLKSGVLLAVLASFTFSVMNALVKEASATLPAAEIVFFRSAIGTLLIYLLMRQAGVALSRQGVPMLLVRGVMGALYLVCYFYAIAHIPLADASILAHMSPFFVILFSALFLGERIPRAVYWLLLVVVLGALMIVKPFSYSSYSVYAVVGLLSAVFAAGASVAIRQLSARHHTYEIVFYFLAVATLVAIPLMWNDFVVPATLREWGLLLAIGVVSLLGQVFLTRAFSHESATIVAVTRYIGIVFNAGWGWLFWSEVPDALTIAGGVLIVVACIALSRTKKG.

10 consecutive transmembrane segments (helical) span residues 2 to 22 (VLDL…TFSV), 34 to 54 (LPAA…IYLL), 74 to 94 (GVMG…IPLA), 96 to 116 (ASIL…LFLG), 122 to 142 (AVYW…KPFS), 147 to 167 (SVYA…SVAI), 179 to 199 (IVFY…WNDF), 209 to 229 (GLLL…TRAF), 236 to 256 (IVAV…WLFW), and 259 to 279 (VPDA…IALS). EamA domains lie at 8-138 (SGVL…LMIV) and 151-279 (VVGL…IALS).

It belongs to the EamA transporter family.

The protein resides in the cell inner membrane. Its function is as follows. Transports the metallophore pseudopaline, which is involved in the acquisition of nickel and zinc, and thus enables bacterial growth inside the host, where metal access is limited. Is probably involved in the export of pseudopaline. Essential for iron acquisition during the interaction with airway mucus secretions (AMS). This is Pseudopaline exporter CntI from Pseudomonas aeruginosa (strain ATCC 15692 / DSM 22644 / CIP 104116 / JCM 14847 / LMG 12228 / 1C / PRS 101 / PAO1).